Reading from the N-terminus, the 31-residue chain is GIPCGESCVYIPCTVTALLGCSCKDKVCYKN.

Residues 1–31 constitute a cross-link (cyclopeptide (Gly-Asn)); that stretch reads GIPCGESCVYIPCTVTALLGCSCKDKVCYKN. Disulfide bonds link Cys4–Cys21, Cys8–Cys23, and Cys13–Cys28.

Contains 3 disulfide bonds. In terms of processing, this is a cyclic peptide. As to expression, expressed in seed, root and nodule but not in flower, stem, shoot, leaf and pod (at protein level).

Its function is as follows. Probably participates in a plant defense mechanism. In Clitoria ternatea (Butterfly pea), this protein is Cliotide T10.